Reading from the N-terminus, the 384-residue chain is Glutamate 5-kinase (384 aa).

Residue Lys-24 participates in ATP binding. Residues Ser-64, Asp-149, and Asn-161 each coordinate substrate. Residues 181 to 182 (TD) and 223 to 229 (TGGMRTK) contribute to the ATP site. One can recognise a PUA domain in the interval 288 to 370 (PGAILIDAGA…RDIQPLLGYT (83 aa)).

This sequence belongs to the glutamate 5-kinase family.

It localises to the cytoplasm. The catalysed reaction is L-glutamate + ATP = L-glutamyl 5-phosphate + ADP. Its pathway is amino-acid biosynthesis; L-proline biosynthesis; L-glutamate 5-semialdehyde from L-glutamate: step 1/2. Catalyzes the transfer of a phosphate group to glutamate to form L-glutamate 5-phosphate. The protein is Glutamate 5-kinase of Xylella fastidiosa (strain 9a5c).